An 869-amino-acid chain; its full sequence is H(+)/Cl(-) exchange transporter 6 (869 aa).

The Cytoplasmic portion of the chain corresponds to M1 to K80. The next 2 helical transmembrane spans lie at W81–V113 and L128–I150. The Selectivity filter part_1 signature appears at G156 to P160. S157 serves as a coordination point for chloride. Residues I159–L166 constitute an intramembrane region (helical). 2 helical membrane passes run R176 to G194 and E200 to F217. The Selectivity filter part_2 signature appears at G198–P202. 2 consecutive intramembrane regions (helical) follow at residues F241–A253 and P257–L265. Helical transmembrane passes span T277–F294, G335–R364, and K371–A392. Residues N410, N422, and N432 are each glycosylated (N-linked (GlcNAc...) asparagine). A run of 2 helical transmembrane segments spans residues P462–G481 and G487–I511. Positions G487–P491 match the Selectivity filter part_3 motif. F489 is a binding site for chloride. The segment at residues G519–V533 is an intramembrane region (helical). Positions V534–M536 form an intramembrane region, note=Loop between two helices. Positions T537–T548 form an intramembrane region, helical. Residues N549–T552 constitute an intramembrane region (note=Loop between two helices). The helical transmembrane segment at Y553–F571 threads the bilayer. The Cytoplasmic segment spans residues N572 to I869. Y576 contacts chloride. The CBS 1 domain occupies M605 to S662. An ATP-binding site is contributed by H630 to A632. Residues A668–R687 are disordered. Residues S677–L686 show a composition bias toward polar residues. Phosphoserine is present on S773. One can recognise a CBS 2 domain in the interval M807–T868. T849–N852 is a binding site for ATP.

Belongs to the chloride channel (TC 2.A.49) family. ClC-6/CLCN6 subfamily. In terms of processing, N-glycosylated on several asparagine residues.

It is found in the late endosome membrane. It carries out the reaction 2 chloride(in) + H(+)(out) = 2 chloride(out) + H(+)(in). In terms of biological role, voltage-gated channel mediating the exchange of chloride ions against protons. Functions as antiporter and contributes to the acidification of the late endosome lumen. The CLC channel family contains both chloride channels and proton-coupled anion transporters that exchange chloride or another anion for protons. The presence of conserved gating glutamate residues is typical for family members that function as antiporters. The protein is H(+)/Cl(-) exchange transporter 6 (CLCN6) of Oryctolagus cuniculus (Rabbit).